Reading from the N-terminus, the 586-residue chain is Pyruvate kinase (586 aa).

Substrate is bound at residue R32. 4 residues coordinate K(+): N34, S36, D66, and T67. 34–37 contributes to the ATP binding site; sequence NFSH. ATP is bound by residues R73 and K156. A Mg(2+)-binding site is contributed by E222. Residues G245, D246, and T278 each coordinate substrate. D246 contributes to the Mg(2+) binding site.

The protein belongs to the pyruvate kinase family. This sequence in the C-terminal section; belongs to the PEP-utilizing enzyme family. It depends on Mg(2+) as a cofactor. K(+) serves as cofactor.

It catalyses the reaction pyruvate + ATP = phosphoenolpyruvate + ADP + H(+). Its pathway is carbohydrate degradation; glycolysis; pyruvate from D-glyceraldehyde 3-phosphate: step 5/5. The protein is Pyruvate kinase (pyk) of Staphylococcus saprophyticus subsp. saprophyticus (strain ATCC 15305 / DSM 20229 / NCIMB 8711 / NCTC 7292 / S-41).